Reading from the N-terminus, the 108-residue chain is MKLIKEDIDKIVRRIFAKQHPLLPKIMINWHKIVGFNFSTKALPLKIKTYTYKKQKINILLIQAEDNATAAELPYYQDIILERIKIYLGFEAIHQMNVTFYKAKSKVR.

This is an uncharacterized protein from Rickettsia prowazekii (strain Madrid E).